A 249-amino-acid chain; its full sequence is Deoxyribose-phosphate aldolase (249 aa).

Asp105 serves as the catalytic Proton donor/acceptor. Catalysis depends on Lys168, which acts as the Schiff-base intermediate with acetaldehyde. Catalysis depends on Lys216, which acts as the Proton donor/acceptor.

The protein belongs to the DeoC/FbaB aldolase family. DeoC type 1 subfamily.

Its subcellular location is the cytoplasm. It catalyses the reaction 2-deoxy-D-ribose 5-phosphate = D-glyceraldehyde 3-phosphate + acetaldehyde. The protein operates within carbohydrate degradation; 2-deoxy-D-ribose 1-phosphate degradation; D-glyceraldehyde 3-phosphate and acetaldehyde from 2-deoxy-alpha-D-ribose 1-phosphate: step 2/2. Its function is as follows. Catalyzes a reversible aldol reaction between acetaldehyde and D-glyceraldehyde 3-phosphate to generate 2-deoxy-D-ribose 5-phosphate. The chain is Deoxyribose-phosphate aldolase from Corynebacterium jeikeium (strain K411).